We begin with the raw amino-acid sequence, 1088 residues long: ATP-dependent helicase/deoxyribonuclease subunit B (1088 aa).

Belongs to the helicase family. AddB/RexB type 2 subfamily. Heterodimer of AddA and RexB. Requires Mg(2+) as cofactor.

Its function is as follows. The heterodimer acts as both an ATP-dependent DNA helicase and an ATP-dependent, dual-direction single-stranded exonuclease. Recognizes the chi site generating a DNA molecule suitable for the initiation of homologous recombination. This subunit has 5' -&gt; 3' nuclease activity but not helicase activity. The sequence is that of ATP-dependent helicase/deoxyribonuclease subunit B from Streptococcus suis (strain 98HAH33).